The primary structure comprises 228 residues: PKHD-type hydroxylase Rmet_0838 (228 aa).

Residues 78–179 (RVLPPMFNRY…RWASFFWAQS (102 aa)) form the Fe2OG dioxygenase domain. Residues His-96, Asp-98, and His-160 each coordinate Fe cation. Arg-170 is a binding site for 2-oxoglutarate.

Fe(2+) is required as a cofactor. L-ascorbate serves as cofactor.

This chain is PKHD-type hydroxylase Rmet_0838, found in Cupriavidus metallidurans (strain ATCC 43123 / DSM 2839 / NBRC 102507 / CH34) (Ralstonia metallidurans).